The following is a 234-amino-acid chain: 2,3-bisphosphoglycerate-dependent phosphoglycerate mutase (234 aa).

Substrate-binding positions include 10 to 17 (RHGSSIWN), 23 to 24 (TG), arginine 62, 89 to 92 (ERHY), lysine 100, 116 to 117 (RR), and 186 to 187 (GN). Histidine 11 acts as the Tele-phosphohistidine intermediate in catalysis. The active-site Proton donor/acceptor is the glutamate 89.

This sequence belongs to the phosphoglycerate mutase family. BPG-dependent PGAM subfamily. As to quaternary structure, homodimer.

The catalysed reaction is (2R)-2-phosphoglycerate = (2R)-3-phosphoglycerate. It functions in the pathway carbohydrate degradation; glycolysis; pyruvate from D-glyceraldehyde 3-phosphate: step 3/5. In terms of biological role, catalyzes the interconversion of 2-phosphoglycerate and 3-phosphoglycerate. The sequence is that of 2,3-bisphosphoglycerate-dependent phosphoglycerate mutase from Wigglesworthia glossinidia brevipalpis.